The chain runs to 591 residues: Putative BTB/POZ domain-containing protein At5g13600 (591 aa).

In terms of domain architecture, BTB spans 28-95 (PDVMIQVVDE…CYGVRIEVTP (68 aa)). Positions 208-493 (NWWFNDVSSF…VQVLFFEQMR (286 aa)) constitute an NPH3 domain. Tyr-434 is subject to Phosphotyrosine.

Belongs to the NPH3 family.

It participates in protein modification; protein ubiquitination. Functionally, may act as a substrate-specific adapter of an E3 ubiquitin-protein ligase complex (CUL3-RBX1-BTB) which mediates the ubiquitination and subsequent proteasomal degradation of target proteins. This is Putative BTB/POZ domain-containing protein At5g13600 from Arabidopsis thaliana (Mouse-ear cress).